The following is a 442-amino-acid chain: 3-isopropylmalate dehydratase large subunit (442 aa).

Residues Xaa-347, Cys-407, and Cys-410 each coordinate [4Fe-4S] cluster.

It belongs to the aconitase/IPM isomerase family. LeuC type 1 subfamily. In terms of assembly, heterodimer of LeuC and LeuD. [4Fe-4S] cluster serves as cofactor.

The enzyme catalyses (2R,3S)-3-isopropylmalate = (2S)-2-isopropylmalate. It participates in amino-acid biosynthesis; L-leucine biosynthesis; L-leucine from 3-methyl-2-oxobutanoate: step 2/4. In terms of biological role, catalyzes the isomerization between 2-isopropylmalate and 3-isopropylmalate, via the formation of 2-isopropylmaleate. In Buchnera aphidicola subsp. Macrosiphoniella ludovicianae, this protein is 3-isopropylmalate dehydratase large subunit.